The chain runs to 1162 residues: DNA-directed RNA polymerase subunit beta (1162 aa).

The protein belongs to the RNA polymerase beta chain family. The RNAP catalytic core consists of 2 alpha, 1 beta, 1 beta' and 1 omega subunit. When a sigma factor is associated with the core the holoenzyme is formed, which can initiate transcription.

It carries out the reaction RNA(n) + a ribonucleoside 5'-triphosphate = RNA(n+1) + diphosphate. DNA-dependent RNA polymerase catalyzes the transcription of DNA into RNA using the four ribonucleoside triphosphates as substrates. The protein is DNA-directed RNA polymerase subunit beta of Clavibacter sepedonicus (Clavibacter michiganensis subsp. sepedonicus).